A 232-amino-acid chain; its full sequence is Y-linked testis-specific protein 1 (232 aa).

It belongs to the SPIN/STSY family. In terms of tissue distribution, expressed in testis (at protein level).

The polypeptide is Y-linked testis-specific protein 1 (Ssty1) (Mus musculus (Mouse)).